Reading from the N-terminus, the 593-residue chain is Glyoxylate carboligase (593 aa).

It belongs to the TPP enzyme family. In terms of assembly, homotetramer. Requires Mg(2+) as cofactor. The cofactor is thiamine diphosphate.

It carries out the reaction 2 glyoxylate + H(+) = 2-hydroxy-3-oxopropanoate + CO2. It functions in the pathway organic acid metabolism; glycolate degradation; 3-phospho-D-glycerate from glycolate: step 2/4. Its function is as follows. Catalyzes the condensation of two molecules of glyoxylate to give 2-hydroxy-3-oxopropanoate (also termed tartronate semialdehyde). The chain is Glyoxylate carboligase (gcl) from Escherichia coli O157:H7.